The chain runs to 83 residues: Short neurotoxin D (83 aa).

Residues 1–21 form the signal peptide; that stretch reads MKTLLLTLVVVTMVCLDLGYT. 4 disulfides stabilise this stretch: cysteine 24–cysteine 45, cysteine 38–cysteine 62, cysteine 64–cysteine 75, and cysteine 76–cysteine 81.

The protein belongs to the three-finger toxin family. Short-chain subfamily. Type I alpha-neurotoxin sub-subfamily. In terms of tissue distribution, expressed by the venom gland.

Its subcellular location is the secreted. In terms of biological role, binds to muscle nicotinic acetylcholine receptor (nAChR) and inhibit acetylcholine from binding to the receptor, thereby impairing neuromuscular transmission. This is Short neurotoxin D from Laticauda colubrina (Yellow-lipped sea krait).